Consider the following 81-residue polypeptide: Large ribosomal subunit protein bL27 (81 aa).

The segment covering 1–11 (MATSKSGGSSK) has biased composition (polar residues). The tract at residues 1–24 (MATSKSGGSSKNGRDSISKRLGVK) is disordered.

This sequence belongs to the bacterial ribosomal protein bL27 family.

The protein is Large ribosomal subunit protein bL27 of Borrelia duttonii (strain Ly).